Reading from the N-terminus, the 1902-residue chain is PI-type proteinase (1902 aa).

Residues 1–33 (MQRKKKGLSILLAGTVALGALAVLPVGEIQAKA) form the signal peptide. Positions 34-187 (AISQQTKGSS…VTLAKVYYPT (154 aa)) are excised as a propeptide. The region spanning 191-697 (ANSMANVQAV…AGLVDVKAAI (507 aa)) is the Peptidase S8 domain. Catalysis depends on charge relay system residues D217, H281, and S620. The disordered stretch occupies residues 1796 to 1874 (GKGDGTTGTS…GALPKTGETT (79 aa)). Residues 1797–1812 (KGDGTTGTSDKGGGQG) show a composition bias toward gly residues. A compositionally biased stretch (polar residues) spans 1830-1843 (SQPSSGGNIPTNPA). Positions 1867–1871 (LPKTG) match the LPXTG sorting signal motif. At T1870 the chain carries Pentaglycyl murein peptidoglycan amidated threonine. The propeptide at 1871 to 1902 (GETTERPAFGFLGVIVVILMGVLGLKRKQREE) is removed by sortase.

It belongs to the peptidase S8 family.

It is found in the secreted. The protein localises to the cell wall. It carries out the reaction Endopeptidase activity with very broad specificity, although some subsite preference have been noted, e.g. large hydrophobic residues in the P1 and P4 positions, and Pro in the P2 position. Best known for its action on caseins, although it has been shown to hydrolyze hemoglobin and oxidized insulin B-chain.. Its function is as follows. Protease which breaks down milk proteins during the growth of the bacteria on milk. The chain is PI-type proteinase (prtP) from Lactococcus lactis subsp. cremoris (Streptococcus cremoris).